Reading from the N-terminus, the 216-residue chain is Peptide methionine sulfoxide reductase MsrA (216 aa).

Cys54 is an active-site residue.

The protein belongs to the MsrA Met sulfoxide reductase family.

The catalysed reaction is L-methionyl-[protein] + [thioredoxin]-disulfide + H2O = L-methionyl-(S)-S-oxide-[protein] + [thioredoxin]-dithiol. The enzyme catalyses [thioredoxin]-disulfide + L-methionine + H2O = L-methionine (S)-S-oxide + [thioredoxin]-dithiol. Has an important function as a repair enzyme for proteins that have been inactivated by oxidation. Catalyzes the reversible oxidation-reduction of methionine sulfoxide in proteins to methionine. The chain is Peptide methionine sulfoxide reductase MsrA from Xylella fastidiosa (strain Temecula1 / ATCC 700964).